Reading from the N-terminus, the 425-residue chain is Glutamyl-tRNA(Gln) amidotransferase subunit D (425 aa).

The tract at residues 53–84 is disordered; sequence ENNGEAANGGNGGKNGQKEPEPAKEKVSKPGL. Positions 68-80 are enriched in basic and acidic residues; the sequence is GQKEPEPAKEKVS. The Asparaginase/glutaminase domain occupies 85–414; the sequence is PKVSILSTGG…EKAVSMLGEN (330 aa). Active-site residues include threonine 95, threonine 171, aspartate 172, and lysine 248.

This sequence belongs to the asparaginase 1 family. GatD subfamily. In terms of assembly, heterodimer of GatD and GatE.

It carries out the reaction L-glutamyl-tRNA(Gln) + L-glutamine + ATP + H2O = L-glutaminyl-tRNA(Gln) + L-glutamate + ADP + phosphate + H(+). Allows the formation of correctly charged Gln-tRNA(Gln) through the transamidation of misacylated Glu-tRNA(Gln) in organisms which lack glutaminyl-tRNA synthetase. The reaction takes place in the presence of glutamine and ATP through an activated gamma-phospho-Glu-tRNA(Gln). The GatDE system is specific for glutamate and does not act on aspartate. The polypeptide is Glutamyl-tRNA(Gln) amidotransferase subunit D (Methanosarcina mazei (strain ATCC BAA-159 / DSM 3647 / Goe1 / Go1 / JCM 11833 / OCM 88) (Methanosarcina frisia)).